The following is a 361-amino-acid chain: Cysteine-rich with EGF-like domain protein 2-A (361 aa).

The N-terminal stretch at 1-24 (MNGSRALHLSAWLLLCLLCSAAVA) is a signal peptide. Residues 134–176 (DCLACLGGSERPCHGNGFCNGDGTRSGDGLCRCEAEYTGPFCL) form the EGF-like 1 domain. 3 cysteine pairs are disulfide-bonded: C138–C152, C146–C164, and C166–C175. N-linked (GlcNAc...) asparagine glycosylation occurs at N188. 2 FU repeats span residues 191–238 (YSLC…EESP) and 251–298 (SFLC…SEQV). The 42-residue stretch at 288–329 (DVDECDASEQVCSRENETCLNTAGSYKCTCSEGFEDKEGNCV) folds into the EGF-like 2; calcium-binding domain. Cystine bridges form between C292-C306, C299-C315, and C317-C328. Residue N303 is glycosylated (N-linked (GlcNAc...) asparagine). Residues 341–361 (DGEMGTSASDINISNTAHEDL) form a disordered region. Residues 346-361 (TSASDINISNTAHEDL) are compositionally biased toward polar residues. Residue N352 is glycosylated (N-linked (GlcNAc...) asparagine).

This sequence belongs to the CRELD family.

The protein resides in the secreted. The protein localises to the endoplasmic reticulum. In terms of biological role, possible role in neuronal acetylcholine receptor transport. The polypeptide is Cysteine-rich with EGF-like domain protein 2-A (creld2-a) (Xenopus laevis (African clawed frog)).